A 168-amino-acid polypeptide reads, in one-letter code: Protein OPG162 (168 aa).

Residues 1 to 14 lie on the Intravirion side of the membrane; sequence MKSLNRQTVSMFKK. Residues 15 to 37 traverse the membrane as a helical segment; it reads LSVPAAIMMILSTIISGIGTFLH. At 38–168 the chain is on the virion surface side; it reads YKEELMPSAC…SVLCVKKFYK (131 aa). One can recognise a C-type lectin domain in the interval 54–163; that stretch reads YDKHCYLDTN…CKSTQSVLCV (110 aa). 2 disulfide bridges follow: Cys-75-Cys-162 and Cys-141-Cys-154. Asn-133 carries an N-linked (GlcNAc...) asparagine; by host glycan.

The protein belongs to the orthopoxvirus OPG162 protein family. As to quaternary structure, interacts with protein OPG161. Interacts with protein OPG164. Interacts with protein OPG190.

It is found in the virion membrane. Its subcellular location is the host Golgi apparatus. Forms a complex with OPG162 and OPG190 to coordinate the incorporation of OPG164 into wrapped enveloped virion (EV) membranes and, subsequently, the production of actin tails. Therefore plays an essential role in efficient cell-to-cell spread of viral particles. This chain is Protein OPG162 (OPG162), found in Homo sapiens (Human).